The chain runs to 20 residues: Apidaecin 3+ (20 aa).

Residues 1–20 (GKPSRPRPAPIQPRPPHPRL) form a disordered region.

This sequence belongs to the apidaecin family.

It is found in the secreted. Functionally, antimicrobial peptide active against many Gram-negative enterobacterial and plant-associated bacterial species. Not active against other bacterial species like H.pylori, P.mirabilis, B.pertussis or N.gonorrhoeae. Its function is as follows. Among others, also active against S.typhi. Not active against S.typhi. In Pimpla disparis (Parasitic wasp), this protein is Apidaecin 3+.